The following is a 110-amino-acid chain: Chagasin (110 aa).

Positions 29-34 match the BC loop motif; the sequence is NPTTGF. The DE loop signature appears at 59-68; it reads PPDSKLLGAG. The FG loop signature appears at 91–100; it reads RPWTGPSHDS.

The protein belongs to the protease inhibitor I42 family. As to quaternary structure, interacts with cruzipain.

Its subcellular location is the flagellar pocket. The protein resides in the cytoplasmic vesicle. It localises to the cell surface. In terms of biological role, cysteine protease inhibitor. Inhibits cysteine protease cruzipain. The chain is Chagasin (cha) from Trypanosoma cruzi.